Consider the following 198-residue polypeptide: MIEKAISRRIKEFRQLGEKGEVEFDFRPFLDFSVKATIRTELAFCISTANSSATAGLKFQRLLGQGVGVKEALTLAGVRFHNRKAEYIREAFKSFKLVEKALEAESSKAREILLKIKGLGMKEASHFLRNVGREDVAIIDRHILRWLERQGYEVPGTMTAKKYLEVEKILMEISEERGESLAEMDLRIWAEMTGKVLK.

Catalysis depends on residues Lys122 and Asp140.

Belongs to the type-2 OGG1 family. As to quaternary structure, monomer.

The enzyme catalyses 2'-deoxyribonucleotide-(2'-deoxyribose 5'-phosphate)-2'-deoxyribonucleotide-DNA = a 3'-end 2'-deoxyribonucleotide-(2,3-dehydro-2,3-deoxyribose 5'-phosphate)-DNA + a 5'-end 5'-phospho-2'-deoxyribonucleoside-DNA + H(+). Functionally, catalyzes the excision of an oxidatively damaged form of guanine (7,8-dihydro-8-oxoguanine = 8-oxoG) from DNA. Also cleaves the DNA backbone at apurinic/apyrimidinic sites (AP sites). Efficiently cleaves oligomers containing 8-oxoG:C and 8-oxoG:G base pairs, and is less effective on oligomers containing 8-oxoG:T and 8-oxoG:A mispairs. The polypeptide is 8-oxoguanine DNA glycosylase/AP lyase (Archaeoglobus fulgidus (strain ATCC 49558 / DSM 4304 / JCM 9628 / NBRC 100126 / VC-16)).